A 180-amino-acid chain; its full sequence is ATP-dependent protease subunit HslV (180 aa).

The active site involves threonine 6. Na(+)-binding residues include alanine 164, cysteine 167, and threonine 170.

Belongs to the peptidase T1B family. HslV subfamily. A double ring-shaped homohexamer of HslV is capped on each side by a ring-shaped HslU homohexamer. The assembly of the HslU/HslV complex is dependent on binding of ATP.

The protein localises to the cytoplasm. It catalyses the reaction ATP-dependent cleavage of peptide bonds with broad specificity.. Allosterically activated by HslU binding. Functionally, protease subunit of a proteasome-like degradation complex believed to be a general protein degrading machinery. This chain is ATP-dependent protease subunit HslV, found in Borrelia turicatae (strain 91E135).